The primary structure comprises 162 residues: UPF0114 protein Sputw3181_3501 (162 aa).

3 helical membrane passes run 15–35, 53–73, and 136–156; these read IMAPIYLGLSLVLLGLGIKFF, LVLVTLSLIDITLVGGLIVMV, and IMWYLLIHITFVLSAFAMGYL.

It belongs to the UPF0114 family.

Its subcellular location is the cell membrane. The sequence is that of UPF0114 protein Sputw3181_3501 from Shewanella sp. (strain W3-18-1).